Here is an 85-residue protein sequence, read N- to C-terminus: Large ribosomal subunit protein eL43 (85 aa).

Cys32, Cys35, Cys50, and Cys53 together coordinate Zn(2+). Residues Cys32–Cys53 form a C4-type zinc finger.

Belongs to the eukaryotic ribosomal protein eL43 family. In terms of assembly, component of the large ribosomal subunit.

The protein localises to the cytoplasm. Its function is as follows. Component of the large ribosomal subunit. The ribosome is a large ribonucleoprotein complex responsible for the synthesis of proteins in the cell. This chain is Large ribosomal subunit protein eL43 (rpl37a), found in Myxine glutinosa (Atlantic hagfish).